Here is a 510-residue protein sequence, read N- to C-terminus: UDP-N-acetylmuramoylalanine--D-glutamate ligase (510 aa).

138-144 (GTNGKTT) contacts ATP. A disordered region spans residues 294 to 316 (FDEPAPAPRRKKDAPPPTRAGGR).

It belongs to the MurCDEF family.

The protein localises to the cytoplasm. It carries out the reaction UDP-N-acetyl-alpha-D-muramoyl-L-alanine + D-glutamate + ATP = UDP-N-acetyl-alpha-D-muramoyl-L-alanyl-D-glutamate + ADP + phosphate + H(+). It functions in the pathway cell wall biogenesis; peptidoglycan biosynthesis. Functionally, cell wall formation. Catalyzes the addition of glutamate to the nucleotide precursor UDP-N-acetylmuramoyl-L-alanine (UMA). In Bordetella pertussis (strain Tohama I / ATCC BAA-589 / NCTC 13251), this protein is UDP-N-acetylmuramoylalanine--D-glutamate ligase.